The following is a 400-amino-acid chain: Melanization protease 1 (400 aa).

The first 22 residues, 1–22 (MEPHFFFTVLWMLLMGTSSTYA), serve as a signal peptide directing secretion. The propeptide at 23-137 (QEIFGYCRTP…PNCGENFGDR (115 aa)) is activation peptide. The 64-residue stretch at 28–91 (YCRTPDENSG…FCFTNVQICC (64 aa)) folds into the Clip domain. Intrachain disulfides connect cysteine 29/cysteine 90, cysteine 39/cysteine 70, and cysteine 45/cysteine 91. The interval 98-120 (NQQPQWGNHPQPTQTTKPTKRSG) is disordered. 3 cysteine pairs are disulfide-bonded: cysteine 130–cysteine 268, cysteine 168–cysteine 184, and cysteine 210–cysteine 220. A Peptidase S1 domain is found at 138 to 399 (VVGGNETTKR…YLNWIENNVR (262 aa)). The N-linked (GlcNAc...) asparagine glycan is linked to asparagine 142. Histidine 183 serves as the catalytic Charge relay system. 4 residues coordinate Ca(2+): glutamate 201, aspartate 203, threonine 206, and aspartate 209. Catalysis depends on aspartate 248, which acts as the Charge relay system. Asparagine 296 carries an N-linked (GlcNAc...) asparagine glycan. Disulfide bonds link cysteine 315-cysteine 332 and cysteine 342-cysteine 375. Residue serine 346 is the Charge relay system of the active site.

It belongs to the peptidase S1 family. CLIP subfamily.

Serine protease which plays an essential role in the melanization immune response by acting downstream of sp7 to activate prophenoloxidase (PPO1). May function in diverse Hayan-dependent PPO1-activating cascades that are negatively controlled by different serpin proteins; Spn27A in the hemolymph and Spn77BA in the trachea. Regulation of melanization and PPO1 activation appears to be largely independent of the Toll signaling pathway. The chain is Melanization protease 1 from Drosophila melanogaster (Fruit fly).